The following is a 539-amino-acid chain: Phosphoenolpyruvate carboxykinase (ATP) (539 aa).

Positions 64, 206, and 212 each coordinate substrate. ATP-binding positions include Lys-212, His-231, and 247–255 (GLSGTGKTT). The Mn(2+) site is built by Lys-212 and His-231. Residue Asp-268 coordinates Mn(2+). Residues Glu-296, Arg-332, 448–449 (RI), and Thr-454 each bind ATP. Arg-332 serves as a coordination point for substrate.

The protein belongs to the phosphoenolpyruvate carboxykinase (ATP) family. In terms of assembly, monomer. Requires Mn(2+) as cofactor.

The protein localises to the cytoplasm. The catalysed reaction is oxaloacetate + ATP = phosphoenolpyruvate + ADP + CO2. Its pathway is carbohydrate biosynthesis; gluconeogenesis. In terms of biological role, involved in the gluconeogenesis. Catalyzes the conversion of oxaloacetate (OAA) to phosphoenolpyruvate (PEP) through direct phosphoryl transfer between the nucleoside triphosphate and OAA. This is Phosphoenolpyruvate carboxykinase (ATP) from Pectobacterium carotovorum subsp. carotovorum (strain PC1).